The chain runs to 861 residues: Valine--tRNA ligase (861 aa).

A 'HIGH' region motif is present at residues 42–52 (PNITGRIHMGH). The 'KMSKS' region motif lies at 521-525 (KMSKS). Lys-524 lines the ATP pocket. A coiled-coil region spans residues 792-861 (VAGLNLQSEI…ILNQILGDLM (70 aa)).

This sequence belongs to the class-I aminoacyl-tRNA synthetase family. ValS type 1 subfamily. In terms of assembly, monomer.

The protein localises to the cytoplasm. The enzyme catalyses tRNA(Val) + L-valine + ATP = L-valyl-tRNA(Val) + AMP + diphosphate. In terms of biological role, catalyzes the attachment of valine to tRNA(Val). As ValRS can inadvertently accommodate and process structurally similar amino acids such as threonine, to avoid such errors, it has a 'posttransfer' editing activity that hydrolyzes mischarged Thr-tRNA(Val) in a tRNA-dependent manner. This Pseudothermotoga lettingae (strain ATCC BAA-301 / DSM 14385 / NBRC 107922 / TMO) (Thermotoga lettingae) protein is Valine--tRNA ligase.